A 99-amino-acid chain; its full sequence is Aspartyl/glutamyl-tRNA(Asn/Gln) amidotransferase subunit C (99 aa).

It belongs to the GatC family. Heterotrimer of A, B and C subunits.

It carries out the reaction L-glutamyl-tRNA(Gln) + L-glutamine + ATP + H2O = L-glutaminyl-tRNA(Gln) + L-glutamate + ADP + phosphate + H(+). The enzyme catalyses L-aspartyl-tRNA(Asn) + L-glutamine + ATP + H2O = L-asparaginyl-tRNA(Asn) + L-glutamate + ADP + phosphate + 2 H(+). Its function is as follows. Allows the formation of correctly charged Asn-tRNA(Asn) or Gln-tRNA(Gln) through the transamidation of misacylated Asp-tRNA(Asn) or Glu-tRNA(Gln) in organisms which lack either or both of asparaginyl-tRNA or glutaminyl-tRNA synthetases. The reaction takes place in the presence of glutamine and ATP through an activated phospho-Asp-tRNA(Asn) or phospho-Glu-tRNA(Gln). In Burkholderia thailandensis (strain ATCC 700388 / DSM 13276 / CCUG 48851 / CIP 106301 / E264), this protein is Aspartyl/glutamyl-tRNA(Asn/Gln) amidotransferase subunit C.